The primary structure comprises 446 residues: Glucose-1-phosphate adenylyltransferase (446 aa).

Alpha-D-glucose 1-phosphate contacts are provided by residues Tyr119, Gly184, 199-200 (EK), and Ser217.

This sequence belongs to the bacterial/plant glucose-1-phosphate adenylyltransferase family. As to quaternary structure, homotetramer.

It catalyses the reaction alpha-D-glucose 1-phosphate + ATP + H(+) = ADP-alpha-D-glucose + diphosphate. The protein operates within glycan biosynthesis; glycogen biosynthesis. In terms of biological role, involved in the biosynthesis of ADP-glucose, a building block required for the elongation reactions to produce glycogen. Catalyzes the reaction between ATP and alpha-D-glucose 1-phosphate (G1P) to produce pyrophosphate and ADP-Glc. This is Glucose-1-phosphate adenylyltransferase from Rhodopirellula baltica (strain DSM 10527 / NCIMB 13988 / SH1).